A 509-amino-acid polypeptide reads, in one-letter code: MDTETLCLITADSGKVYGILKAIFGDESEIVKKLIDFDVSIRVVPLNLGLLNIFRDNAADLDNADLMKRRFGNTMGSRIVEAYRRSQDSKYKRNVCKTTGLLVCLFGGGLGLSREADKHKKFVEGKSHNILSVEMLKRALSIGGQNVDANKISSFWFATYTIFTTVYSPRLRYQAGSSKRIIALSESRNQYRSNLFWDLRDDSSHEVMSMVHVLSALFASALTAYISTRVAHELTQGNDERESLNNVLVWLKTLTFEPSTIALIAYIWLVSPTDAQATITIGSVMESESSDDFPDIVKILSYTSNTMLPVQLLEDGRTAYCSVADGYTTHTTALTLITDYNSSHMSDKFGVLINIVKFEHAYALHYVHHKPRDGKEMTITSPSSEMMFTSVVVTPLSSYPLIHARNAVIDWLRTFVHMFPDSGSLVIPADSYTWIHNLAQDMFPWVRLSTTLDIRDDHYFQVLCDCLSLEHDSRNHTKVEKLIKYMKASVYNFTSEARGNMLLAITVYK.

The protein resides in the host cell junction. Its subcellular location is the host plasmodesma. It is found in the host cytoplasm. Transports viral genome to neighboring plant cells directly through plasmosdesmata, without any budding. The movement protein allows efficient cell to cell propagation, by bypassing the host cell wall barrier. Increases virus accumulation and symptom severity. The sequence is that of Movement protein from Rice dwarf virus (isolate Akita) (RDV).